Here is a 371-residue protein sequence, read N- to C-terminus: Putative glutamate--cysteine ligase 2 (371 aa).

It belongs to the glutamate--cysteine ligase type 2 family. YbdK subfamily.

The enzyme catalyses L-cysteine + L-glutamate + ATP = gamma-L-glutamyl-L-cysteine + ADP + phosphate + H(+). Functionally, ATP-dependent carboxylate-amine ligase which exhibits weak glutamate--cysteine ligase activity. The chain is Putative glutamate--cysteine ligase 2 from Cupriavidus pinatubonensis (strain JMP 134 / LMG 1197) (Cupriavidus necator (strain JMP 134)).